Reading from the N-terminus, the 462-residue chain is NAD-capped RNA hydrolase NUDT12 (462 aa).

ANK repeat units lie at residues 11–40 (EIVT…SLLN), 45–74 (NGWT…DRSI), and 78–98 (SRQT…ANLL). An N6-succinyllysine modification is found at Lys185. Zn(2+) contacts are provided by Cys284 and Cys287. At Lys292 the chain carries N6-succinyllysine. Residues Cys302 and Cys307 each coordinate Zn(2+). Residues Tyr318, 354-356 (AGF), Glu370, Glu374, and Glu415 contribute to the substrate site. The Nudix hydrolase domain occupies 319–453 (PRVDPVVIMQ…SRAIAHQLIK (135 aa)). Residues Ala354, Glu370, Glu374, and Glu415 each contribute to the Mg(2+) site. A Nudix box motif is present at residues 355–376 (GFIEPGETIEDAVRREVEEESG). A Microbody targeting signal motif is present at residues 460–462 (PNL).

The protein belongs to the Nudix hydrolase family. NudC subfamily. As to quaternary structure, homodimer. Homodimerization is essential for its catalytic activity and protein stability. Interacts (via ANK repeats) with BLMH. Mg(2+) serves as cofactor. The cofactor is Zn(2+).

Its subcellular location is the cytoplasm. The protein localises to the peroxisome. The protein resides in the cytoplasmic granule. It catalyses the reaction a 5'-end NAD(+)-phospho-ribonucleoside in mRNA + H2O = a 5'-end phospho-adenosine-phospho-ribonucleoside in mRNA + beta-nicotinamide D-ribonucleotide + 2 H(+). The enzyme catalyses NAD(+) + H2O = beta-nicotinamide D-ribonucleotide + AMP + 2 H(+). The catalysed reaction is NADH + H2O = reduced beta-nicotinamide D-ribonucleotide + AMP + 2 H(+). It carries out the reaction NADPH + H2O = reduced beta-nicotinamide D-ribonucleotide + adenosine 2',5'-bisphosphate + 2 H(+). Functionally, mRNA decapping enzyme that specifically removes the nicotinamide adenine dinucleotide (NAD) cap from a subset of mRNAs by hydrolyzing the diphosphate linkage to produce nicotinamide mononucleotide (NMN) and 5' monophosphate mRNA. The NAD-cap is present at the 5'-end of some RNAs; in contrast to the canonical N7 methylguanosine (m7G) cap, the NAD cap promotes mRNA decay. Preferentially acts on NAD-capped transcripts in response to nutrient stress. Also acts on free nicotinamide adenine dinucleotide molecules: hydrolyzes NAD(H) into NMN(H) and AMP, and NADPH into NMNH and 2',5'-ADP. May act to regulate the concentration of peroxisomal nicotinamide nucleotide cofactors required for oxidative metabolism in this organelle. Regulates the levels of circadian clock components PER1, PER2, PER3 and CRY2 in the liver. The chain is NAD-capped RNA hydrolase NUDT12 from Pongo abelii (Sumatran orangutan).